We begin with the raw amino-acid sequence, 483 residues long: Cobyric acid synthase (483 aa).

The GATase cobBQ-type domain occupies 251–438; sequence ALIVAVPMLP…LHGVFSADRF (188 aa). C333 functions as the Nucleophile in the catalytic mechanism. Residue H430 is part of the active site.

This sequence belongs to the CobB/CobQ family. CobQ subfamily.

It functions in the pathway cofactor biosynthesis; adenosylcobalamin biosynthesis. Catalyzes amidations at positions B, D, E, and G on adenosylcobyrinic A,C-diamide. NH(2) groups are provided by glutamine, and one molecule of ATP is hydrogenolyzed for each amidation. The sequence is that of Cobyric acid synthase from Brucella melitensis biotype 2 (strain ATCC 23457).